The chain runs to 333 residues: Ribosomal RNA small subunit methyltransferase H (333 aa).

S-adenosyl-L-methionine is bound by residues 43 to 45, Asp-62, Tyr-89, Asp-110, and Gln-117; that span reads GGH. The interval 312–333 is disordered; the sequence is RLRAARRIRTTPTRPSPRRRRP.

Belongs to the methyltransferase superfamily. RsmH family.

It localises to the cytoplasm. The catalysed reaction is cytidine(1402) in 16S rRNA + S-adenosyl-L-methionine = N(4)-methylcytidine(1402) in 16S rRNA + S-adenosyl-L-homocysteine + H(+). In terms of biological role, specifically methylates the N4 position of cytidine in position 1402 (C1402) of 16S rRNA. In Beutenbergia cavernae (strain ATCC BAA-8 / DSM 12333 / CCUG 43141 / JCM 11478 / NBRC 16432 / NCIMB 13614 / HKI 0122), this protein is Ribosomal RNA small subunit methyltransferase H.